Consider the following 197-residue polypeptide: dTTP/UTP pyrophosphatase (197 aa).

Aspartate 70 (proton acceptor) is an active-site residue.

It belongs to the Maf family. YhdE subfamily. Requires a divalent metal cation as cofactor.

Its subcellular location is the cytoplasm. The enzyme catalyses dTTP + H2O = dTMP + diphosphate + H(+). It catalyses the reaction UTP + H2O = UMP + diphosphate + H(+). In terms of biological role, nucleoside triphosphate pyrophosphatase that hydrolyzes dTTP and UTP. May have a dual role in cell division arrest and in preventing the incorporation of modified nucleotides into cellular nucleic acids. The polypeptide is dTTP/UTP pyrophosphatase (yceF2) (Shigella boydii serotype 4 (strain Sb227)).